We begin with the raw amino-acid sequence, 158 residues long: 6,7-dimethyl-8-ribityllumazine synthase (158 aa).

Residues F22, 57–59 (AVE), and 81–83 (AVI) contribute to the 5-amino-6-(D-ribitylamino)uracil site. 86–87 (GT) is a (2S)-2-hydroxy-3-oxobutyl phosphate binding site. The active-site Proton donor is H89. F114 contacts 5-amino-6-(D-ribitylamino)uracil. A (2S)-2-hydroxy-3-oxobutyl phosphate-binding site is contributed by R128.

This sequence belongs to the DMRL synthase family. In terms of assembly, forms an icosahedral capsid composed of 60 subunits, arranged as a dodecamer of pentamers.

It catalyses the reaction (2S)-2-hydroxy-3-oxobutyl phosphate + 5-amino-6-(D-ribitylamino)uracil = 6,7-dimethyl-8-(1-D-ribityl)lumazine + phosphate + 2 H2O + H(+). Its pathway is cofactor biosynthesis; riboflavin biosynthesis; riboflavin from 2-hydroxy-3-oxobutyl phosphate and 5-amino-6-(D-ribitylamino)uracil: step 1/2. Catalyzes the formation of 6,7-dimethyl-8-ribityllumazine by condensation of 5-amino-6-(D-ribitylamino)uracil with 3,4-dihydroxy-2-butanone 4-phosphate. This is the penultimate step in the biosynthesis of riboflavin. The polypeptide is 6,7-dimethyl-8-ribityllumazine synthase (Shewanella frigidimarina (strain NCIMB 400)).